We begin with the raw amino-acid sequence, 640 residues long: 1-deoxy-D-xylulose-5-phosphate synthase (640 aa).

Residues His79 and 120–122 contribute to the thiamine diphosphate site; that span reads GHS. Asp151 contacts Mg(2+). Residues 152–153, Asn180, Tyr287, and Glu369 each bind thiamine diphosphate; that span reads GA. Asn180 is a binding site for Mg(2+).

Belongs to the transketolase family. DXPS subfamily. In terms of assembly, homodimer. Mg(2+) serves as cofactor. Requires thiamine diphosphate as cofactor.

It catalyses the reaction D-glyceraldehyde 3-phosphate + pyruvate + H(+) = 1-deoxy-D-xylulose 5-phosphate + CO2. The protein operates within metabolic intermediate biosynthesis; 1-deoxy-D-xylulose 5-phosphate biosynthesis; 1-deoxy-D-xylulose 5-phosphate from D-glyceraldehyde 3-phosphate and pyruvate: step 1/1. In terms of biological role, catalyzes the acyloin condensation reaction between C atoms 2 and 3 of pyruvate and glyceraldehyde 3-phosphate to yield 1-deoxy-D-xylulose-5-phosphate (DXP). The polypeptide is 1-deoxy-D-xylulose-5-phosphate synthase (Thioalkalivibrio sulfidiphilus (strain HL-EbGR7)).